The chain runs to 51 residues: MRNRWFSVMVGPSVRVNEWFSAYAMAGMAYSRVSTFSGDYLRVTDNKGRCE.

The protein belongs to the outer membrane OOP (TC 1.B.6) superfamily. Ail family.

The chain is Putative protein LomR (lomR) from Escherichia coli (strain K12).